Reading from the N-terminus, the 193-residue chain is MLGCRFVAGVQDRKSFPDFGVPEVAFAGRSNVGKSSLINAITNNKKNAKTSSNPGSTRQINFYLNKGIVALVDLPGYGYSKASKEATRGYLDVMEHYLMSREALQRLVLLIDSRIGLKEIDRDFLCWLEEHGIYYSIVLTKADKLSEQALGSMVSFVQNQAQGGNFLLQPIMWVSSKSGRGIRELAHEISRCI.

Residues 20-193 (GVPEVAFAGR…ELAHEISRCI (174 aa)) enclose the EngB-type G domain. Residues 28-35 (GRSNVGKS), 55-59 (GSTRQ), 73-76 (DLPG), 140-143 (TKAD), and 171-176 (IMWVSS) each bind GTP. Mg(2+) contacts are provided by S35 and T57.

It belongs to the TRAFAC class TrmE-Era-EngA-EngB-Septin-like GTPase superfamily. EngB GTPase family. Mg(2+) serves as cofactor.

Functionally, necessary for normal cell division and for the maintenance of normal septation. The sequence is that of Probable GTP-binding protein EngB from Anaplasma phagocytophilum (strain HZ).